Consider the following 290-residue polypeptide: UBX domain-containing protein 1-B (290 aa).

A UBA domain is found at 1–42 (MADCSALESLIEMGFSPSRAEKALSATGNQGIEPAMDWLVEH). The interval 49 to 210 (KEPSVVIPED…VQEPPTKKEY (162 aa)) is disordered. 2 stretches are compositionally biased toward basic and acidic residues: residues 80-117 (PLTE…EQEK) and 132-172 (RMQE…DRAR). The stretch at 81–171 (LTEEEKEKQT…KIARDKADRA (91 aa)) forms a coiled coil. Low complexity predominate over residues 185–201 (PAETSVPATAPSPSSPV). The region spanning 208–287 (KEYDQCRIQV…GLVPTAVLIV (80 aa)) is the UBX domain.

It localises to the cytoplasm. Component of a complex required to couple deglycosylation and proteasome-mediated degradation of misfolded proteins in the endoplasmic reticulum that are retrotranslocated in the cytosol. Involved in ubiquitin-proteasome systems. This Xenopus laevis (African clawed frog) protein is UBX domain-containing protein 1-B (ubxn1-b).